Consider the following 48-residue polypeptide: Bacteriocin plantaricin-A (48 aa).

Residues 1-25 (MKIQIKGMKQLSNKEMQKIVGGKSS) constitute a propeptide that is removed on maturation.

In terms of assembly, active plantaricin A is composed of an alpha chain and a beta chain.

In terms of biological role, this heat stable bacteriocin inhibits the growth of closely related Lactobacillus species. It may act as a pore-forming protein, creating a channel in the cell membrane through a 'barrel stave' mechanism. This is Bacteriocin plantaricin-A (plnA) from Lactiplantibacillus plantarum (strain ATCC BAA-793 / NCIMB 8826 / WCFS1) (Lactobacillus plantarum).